A 470-amino-acid polypeptide reads, in one-letter code: Cell division protein FtsA (470 aa).

Residues Asn-416–Glu-470 are disordered. Acidic residues predominate over residues Val-425–Gln-434. A compositionally biased stretch (basic and acidic residues) spans Glu-436–Phe-461.

The protein belongs to the FtsA/MreB family. Self-interacts. Interacts with FtsZ.

The protein resides in the cell membrane. Its function is as follows. Cell division protein that is involved in the assembly of the Z ring. May serve as a membrane anchor for the Z ring. The polypeptide is Cell division protein FtsA (Staphylococcus aureus (strain MSSA476)).